The chain runs to 392 residues: Erythronate-4-phosphate dehydrogenase (392 aa).

Residues S48 and T69 each coordinate substrate. D149 contacts NAD(+). The active site involves R215. D239 lines the NAD(+) pocket. The active site involves E244. The Proton donor role is filled by H261. G264 is an NAD(+) binding site. Y265 is a substrate binding site.

The protein belongs to the D-isomer specific 2-hydroxyacid dehydrogenase family. PdxB subfamily. In terms of assembly, homodimer.

Its subcellular location is the cytoplasm. It catalyses the reaction 4-phospho-D-erythronate + NAD(+) = (R)-3-hydroxy-2-oxo-4-phosphooxybutanoate + NADH + H(+). It functions in the pathway cofactor biosynthesis; pyridoxine 5'-phosphate biosynthesis; pyridoxine 5'-phosphate from D-erythrose 4-phosphate: step 2/5. Its function is as follows. Catalyzes the oxidation of erythronate-4-phosphate to 3-hydroxy-2-oxo-4-phosphonooxybutanoate. This Salinibacter ruber (strain DSM 13855 / M31) protein is Erythronate-4-phosphate dehydrogenase.